The chain runs to 800 residues: Transducin beta-like protein 3 (800 aa).

A2 carries the N-acetylalanine modification. WD repeat units follow at residues 64 to 105 (EDQE…RLWK), 107 to 146 (IHTAPVASMAFDATSTLLATGGCDGAVRVWDIVQHYGTHH), 149 to 190 (GSPG…CLAV), 193 to 232 (AHYSAVTSLSFSEDGHTMLSSGRDKICIVWDLRSYETSRT), 245 to 284 (LPEEPALALGVKNSGLHFLTAGDQGILRVWEAASGQCVYT), 290 to 329 (GLRQELTHCTLARAAGLLLTVTADHNLLLYEARSLQLQKQ), 332 to 372 (GYSE…CQIL), 374 to 413 (GHTDIVLALDVFRKGWLFASCAKDQSIRIWRMNKAGQVAC), 419 to 459 (GHTH…PSKN), 477 to 516 (CHDKDINSLAVSPNDKLLATGSQDRTAKLWALPQCQLLGV), 519 to 560 (GHRR…KTFE), 562 to 602 (HDAS…RTLD), and 604 to 642 (HEDKVWGLHCSRLDDHAITGGSDSRIILWKDVTEAEQAE). K407 participates in a covalent cross-link: Glycyl lysine isopeptide (Lys-Gly) (interchain with G-Cter in SUMO2).

Part of the small subunit (SSU) processome, composed of more than 70 proteins and the RNA chaperone small nucleolar RNA (snoRNA) U3.

Its subcellular location is the nucleus. The protein resides in the nucleolus. In terms of biological role, part of the small subunit (SSU) processome, first precursor of the small eukaryotic ribosomal subunit. During the assembly of the SSU processome in the nucleolus, many ribosome biogenesis factors, an RNA chaperone and ribosomal proteins associate with the nascent pre-rRNA and work in concert to generate RNA folding, modifications, rearrangements and cleavage as well as targeted degradation of pre-ribosomal RNA by the RNA exosome. This chain is Transducin beta-like protein 3 (Tbl3), found in Rattus norvegicus (Rat).